Here is a 1327-residue protein sequence, read N- to C-terminus: Myb-like protein O (1327 aa).

Low complexity predominate over residues 131–142 (NNNINTTNNNNK). 4 disordered regions span residues 131–153 (NNNI…EESN), 263–390 (EEED…DESS), 504–668 (PPQQ…NHES), and 717–770 (KKKK…DNDD). Positions 263–283 (EEEDDEDYIPPEEEEDDDEDN) are enriched in acidic residues. A compositionally biased stretch (low complexity) spans 322-353 (YNNTANNINNNNIGDESDNNNNNNNNINNNSN). The segment covering 356-374 (DDDDDDDDDNNDDDDDDND) has biased composition (acidic residues). Positions 511-532 (SSSSINSSNTMSSSSSSSSLSK) are enriched in low complexity. The segment covering 533-542 (NKLKKKKKEE) has biased composition (basic residues). The span at 543 to 554 (KRKEEKRKEEKR) shows a compositional bias: basic and acidic residues. Over residues 555–577 (KEKKRKKRQSITISKFKKNKKKT) the composition is skewed to basic residues. Residues 585 to 606 (SESDSSSDDSDDSDFYYSDIEE) show a composition bias toward acidic residues. The segment covering 607–619 (GGGGNGNGSGSGV) has biased composition (gly residues). The segment covering 624–633 (SDNEEGDSSS) has biased composition (acidic residues). 2 stretches are compositionally biased toward low complexity: residues 646–668 (HTNN…NHES) and 722–732 (QSSSSSSSSTI). The segment covering 754 to 770 (NDDEDDNNNNNEDDNDD) has biased composition (acidic residues). An HTH myb-type domain is found at 897–953 (NVKLNQLKFTGGEDLLLLMGVKRFGTFNWRIIQKRYFPNKTDDQLFHRYKNLLSHSS). The H-T-H motif DNA-binding region spans 925 to 949 (WRIIQKRYFPNKTDDQLFHRYKNLL). In terms of domain architecture, Myb-like 1 spans 959–1010 (KQYLNGAKFTKEEEEKLDGAIKIHGLKWDIISRDYLHWKEPAMLKKFYEKRE). Low complexity-rich tracts occupy residues 1061–1118 (NSTN…NENN) and 1144–1160 (PIIE…ETSP). Disordered stretches follow at residues 1061–1122 (NSTN…YEFG) and 1144–1168 (PIIE…PCPI). The Myb-like 2 domain occupies 1268–1316 (KWTREEDRIILITVKEKGTVDNEIWKSLSDTKIQDKTPDQIMYRYLQLL).

The protein localises to the nucleus. This chain is Myb-like protein O (mybO), found in Dictyostelium discoideum (Social amoeba).